The sequence spans 124 residues: Period circadian protein (124 aa).

A disordered region spans residues 30–124 (TAPVELDPPK…TVTLTESLLN (95 aa)). Low complexity predominate over residues 71-96 (SGNFTTGSNVRMSSVTNTSNAGTGTS). Residues 97 to 107 (SAGGNGNGGSG) show a composition bias toward gly residues.

Forms a heterodimer with timeless (TIM); the complex then translocates into the nucleus. Post-translationally, phosphorylated with a circadian rhythmicity, probably by the double-time protein (dbt). Phosphorylation could be implicated in the stability of per monomer and in the formation of heterodimer per-tim.

Its subcellular location is the nucleus. It is found in the cytoplasm. The protein resides in the perinuclear region. Essential for biological clock functions. Determines the period length of circadian and ultradian rhythms; an increase in PER dosage leads to shortened circadian rhythms and a decrease leads to lengthened circadian rhythms. Essential for the circadian rhythmicity of locomotor activity, eclosion behavior, and for the rhythmic component of the male courtship song that originates in the thoracic nervous system. The biological cycle depends on the rhythmic formation and nuclear localization of the TIM-PER complex. Light induces the degradation of TIM, which promotes elimination of PER. Nuclear activity of the heterodimer coordinatively regulates PER and TIM transcription through a negative feedback loop. Behaves as a negative element in circadian transcriptional loop. Does not appear to bind DNA, suggesting indirect transcriptional inhibition. The protein is Period circadian protein (per) of Hirtodrosophila pictiventris (Fruit fly).